We begin with the raw amino-acid sequence, 693 residues long: Sister chromatid cohesion 1 protein 3 (693 aa).

Disordered regions lie at residues 167–250 (IPMD…PGTV), 262–361 (DLSP…KNFD), 460–511 (PVSP…TFDN), and 545–573 (TQSG…GQRN). 2 stretches are compositionally biased toward basic and acidic residues: residues 178 to 201 (VSRH…EPRD) and 232 to 243 (TEERIPNSERND). Polar residues predominate over residues 264-277 (SPTSHPSFAAQQQD). Over residues 278–295 (VRVERTESLDETLNEKEP) the composition is skewed to basic and acidic residues. The segment covering 316-325 (RSGSPGSAAG) has biased composition (low complexity). Polar residues-rich tracts occupy residues 465 to 483 (PDST…QQTE) and 545 to 564 (TQSG…TSTV).

This sequence belongs to the rad21 family. As to quaternary structure, component of the cohesin complex. In terms of tissue distribution, low expression in shoots, buds, siliques, leaves and roots. Found in, but not limited to, actively dividing cells: in procambium, protoderm and ground meristem in roots, and in shoot and floral meristems.

It is found in the nucleus. Its function is as follows. May be involved in sister chromatid cohesion during mitosis. The sequence is that of Sister chromatid cohesion 1 protein 3 (SYN3) from Arabidopsis thaliana (Mouse-ear cress).